The sequence spans 56 residues: Large ribosomal subunit protein bL33 (56 aa).

Belongs to the bacterial ribosomal protein bL33 family.

This Haemophilus influenzae (strain 86-028NP) protein is Large ribosomal subunit protein bL33.